Reading from the N-terminus, the 164-residue chain is MQKQHQRQHKVELVANLKSQFDSAKALLICDYKGLSVRKLEALRNKARIQGIKVQVIKNTLAHIAMKEAGCADLDLKETNVFLWGDDQIALSKLVFDFQKEHKDHFVLKAGLFDKESVSVAHVEAVSKLPSKEELMGMLLSVWTAPARYFVTGLDNLRKAKEEN.

Belongs to the universal ribosomal protein uL10 family. Part of the ribosomal stalk of the 50S ribosomal subunit. The N-terminus interacts with L11 and the large rRNA to form the base of the stalk. The C-terminus forms an elongated spine to which L12 dimers bind in a sequential fashion forming a multimeric L10(L12)X complex.

Forms part of the ribosomal stalk, playing a central role in the interaction of the ribosome with GTP-bound translation factors. In Helicobacter pylori (strain P12), this protein is Large ribosomal subunit protein uL10.